Reading from the N-terminus, the 341-residue chain is Putative UPF0607 protein ENSP00000381514 (341 aa).

Basic and acidic residues predominate over residues alanine 78–aspartate 89. Disordered stretches follow at residues alanine 78–proline 131 and glycine 216–cysteine 282. The span at glutamate 108–tyrosine 127 shows a compositional bias: polar residues. Residues alanine 243–leucine 252 are compositionally biased toward basic residues.

The protein belongs to the UPF0607 family.

This is Putative UPF0607 protein ENSP00000381514 from Homo sapiens (Human).